The primary structure comprises 208 residues: MSNGFQMPSSRYVLPSFIEQSAYGTKETNPYAKLFEERIIFLGTQVDDTSANDIMAQLLVLEGMDPDRDITMYINSPGGSFTALMAIYDTMQYVRPDVQTVCLGQAASAAAVLLAAGAPGKRAALPNARVLIHQPATQGTQGQVSDLEIQAAEIERMRKLMETTLSQHTGKTPEQIRIDTDRDKILTAEGALEYGIIDQVFDYRKLNT.

Ser108 acts as the Nucleophile in catalysis. Residue His133 is part of the active site.

The protein belongs to the peptidase S14 family. Fourteen ClpP subunits assemble into 2 heptameric rings which stack back to back to give a disk-like structure with a central cavity, resembling the structure of eukaryotic proteasomes.

The protein resides in the cytoplasm. It catalyses the reaction Hydrolysis of proteins to small peptides in the presence of ATP and magnesium. alpha-casein is the usual test substrate. In the absence of ATP, only oligopeptides shorter than five residues are hydrolyzed (such as succinyl-Leu-Tyr-|-NHMec, and Leu-Tyr-Leu-|-Tyr-Trp, in which cleavage of the -Tyr-|-Leu- and -Tyr-|-Trp bonds also occurs).. In terms of biological role, cleaves peptides in various proteins in a process that requires ATP hydrolysis. Has a chymotrypsin-like activity. Plays a major role in the degradation of misfolded proteins. This chain is ATP-dependent Clp protease proteolytic subunit 1, found in Corynebacterium efficiens (strain DSM 44549 / YS-314 / AJ 12310 / JCM 11189 / NBRC 100395).